We begin with the raw amino-acid sequence, 61 residues long: Sperm protamine P1 (61 aa).

Residues 1 to 61 form a disordered region; it reads MARYRHSRSR…RRYHSHRRRY (61 aa).

The protein belongs to the protamine P1 family. In terms of tissue distribution, testis.

It is found in the nucleus. It localises to the chromosome. Its function is as follows. Protamines substitute for histones in the chromatin of sperm during the haploid phase of spermatogenesis. They compact sperm DNA into a highly condensed, stable and inactive complex. The polypeptide is Sperm protamine P1 (PRM1) (Notoryctes typhlops (Southern marsupial mole)).